The primary structure comprises 378 residues: uncharacterized protein (378 aa).

Zn(2+) is bound by residues Cys-38, His-60, Cys-90, Cys-93, Cys-96, and Cys-104.

The protein belongs to the zinc-containing alcohol dehydrogenase family. Class-III subfamily. Requires Zn(2+) as cofactor.

This is an uncharacterized protein from Bacillus subtilis (strain 168).